Reading from the N-terminus, the 339-residue chain is D-erythrose-4-phosphate dehydrogenase (339 aa).

11 to 12 (RI) contributes to the NAD(+) binding site. Residues 158 to 160 (SCT), Arg-204, 217 to 218 (TK), and Arg-240 contribute to the substrate site. The active-site Nucleophile is Cys-159. NAD(+) is bound at residue Asn-322.

This sequence belongs to the glyceraldehyde-3-phosphate dehydrogenase family. Epd subfamily. As to quaternary structure, homotetramer.

It localises to the cytoplasm. The enzyme catalyses D-erythrose 4-phosphate + NAD(+) + H2O = 4-phospho-D-erythronate + NADH + 2 H(+). It participates in cofactor biosynthesis; pyridoxine 5'-phosphate biosynthesis; pyridoxine 5'-phosphate from D-erythrose 4-phosphate: step 1/5. In terms of biological role, catalyzes the NAD-dependent conversion of D-erythrose 4-phosphate to 4-phosphoerythronate. The polypeptide is D-erythrose-4-phosphate dehydrogenase (Aliivibrio salmonicida (strain LFI1238) (Vibrio salmonicida (strain LFI1238))).